The sequence spans 245 residues: 23S rRNA (guanosine-2'-O-)-methyltransferase RlmB (245 aa).

3 residues coordinate S-adenosyl-L-methionine: glycine 197, isoleucine 217, and leucine 226.

The protein belongs to the class IV-like SAM-binding methyltransferase superfamily. RNA methyltransferase TrmH family. RlmB subfamily.

The protein resides in the cytoplasm. It carries out the reaction guanosine(2251) in 23S rRNA + S-adenosyl-L-methionine = 2'-O-methylguanosine(2251) in 23S rRNA + S-adenosyl-L-homocysteine + H(+). In terms of biological role, specifically methylates the ribose of guanosine 2251 in 23S rRNA. The polypeptide is 23S rRNA (guanosine-2'-O-)-methyltransferase RlmB (Pasteurella multocida (strain Pm70)).